We begin with the raw amino-acid sequence, 358 residues long: Low-specificity L-threonine aldolase 1 (358 aa).

Residue K207 is modified to N6-(pyridoxal phosphate)lysine.

This sequence belongs to the threonine aldolase family. It depends on pyridoxal 5'-phosphate as a cofactor. As to expression, expressed in root tips, seedlings, carpels and seeds.

The catalysed reaction is L-threonine = acetaldehyde + glycine. The enzyme catalyses L-allo-threonine = acetaldehyde + glycine. It functions in the pathway amino-acid degradation; L-threonine degradation via aldolase pathway; acetaldehyde and glycine from L-threonine: step 1/1. Functionally, threonine aldolase involved in threonine degradation to glycine. May play a role in the removal of L-allo-threonine. This chain is Low-specificity L-threonine aldolase 1, found in Arabidopsis thaliana (Mouse-ear cress).